Reading from the N-terminus, the 76-residue chain is uncharacterized protein (76 aa).

This is an uncharacterized protein from Saccharomyces cerevisiae (strain ATCC 204508 / S288c) (Baker's yeast).